The chain runs to 246 residues: MKPSDVRSKAFAMPLTSPAFPMGPYRFVDREFVIITYRTDPERLRAVVPEPLQIAEPLVHYEFIRMADSTGFGDYTESGQVIPVEYNGQAGGYTLAMYLDDHPPIAGGRELWGFPKKLASPTLHVNTDHILGTLDYGKVRVATGTMGYKHKELDLDEQMKRLAGPNFLLKIIPHVDGSARVCELVRYYLQDIKMKGAWTGPASLELAPHALAPVADLPVLEIVEARHIVADLTLGLGEVVYDYLAQ.

The Schiff-base intermediate with acetoacetate role is filled by Lys116.

It belongs to the ADC family.

It carries out the reaction acetoacetate + H(+) = acetone + CO2. Catalyzes the conversion of acetoacetate to acetone and carbon dioxide. In Burkholderia vietnamiensis (strain G4 / LMG 22486) (Burkholderia cepacia (strain R1808)), this protein is Acetoacetate decarboxylase.